Consider the following 382-residue polypeptide: Alkanesulfonate monooxygenase (382 aa).

The protein belongs to the SsuD family.

It catalyses the reaction an alkanesulfonate + FMNH2 + O2 = an aldehyde + FMN + sulfite + H2O + 2 H(+). Functionally, catalyzes the desulfonation of aliphatic sulfonates. The polypeptide is Alkanesulfonate monooxygenase (Pseudomonas sp).